The chain runs to 134 residues: Ethylmalonyl-CoA/methylmalonyl-CoA epimerase (134 aa).

Residues Arg4–Val134 enclose the VOC domain. 3 residues coordinate Co(2+): His7, His79, and Glu130. Residue Glu130 is the Proton donor/acceptor of the active site.

It belongs to the methylmalonyl-CoA epimerase family. Co(2+) serves as cofactor. Requires Mn(2+) as cofactor.

It carries out the reaction (2R)-ethylmalonyl-CoA = (2S)-ethylmalonyl-CoA. It catalyses the reaction (R)-methylmalonyl-CoA = (S)-methylmalonyl-CoA. In terms of biological role, promiscuous isomerase that catalyzes epimerization of both ethylmalonyl-CoA and methylmalonyl-CoA. Has thus a dual role in the ethylmalonyl-CoA pathway for acetyl-CoA assimilation required for R.sphaeroides growth on acetate as sole carbon source. The protein is Ethylmalonyl-CoA/methylmalonyl-CoA epimerase of Cereibacter sphaeroides (strain ATCC 17023 / DSM 158 / JCM 6121 / CCUG 31486 / LMG 2827 / NBRC 12203 / NCIMB 8253 / ATH 2.4.1.) (Rhodobacter sphaeroides).